We begin with the raw amino-acid sequence, 440 residues long: Ribosomal protein uS12 methylthiotransferase RimO (440 aa).

The MTTase N-terminal domain maps to 7–117; the sequence is PKISFVSLGC…VLDAVHRALP (111 aa). The [4Fe-4S] cluster site is built by Cys-16, Cys-52, Cys-81, Cys-148, Cys-152, and Cys-155. Positions 134-370 constitute a Radical SAM core domain; the sequence is LTPRHYAYLK…MARQQKISAQ (237 aa). One can recognise a TRAM domain in the interval 373–439; it reads KRKVGTRQQV…EYDLHGSVAG (67 aa).

This sequence belongs to the methylthiotransferase family. RimO subfamily. It depends on [4Fe-4S] cluster as a cofactor.

The protein resides in the cytoplasm. The catalysed reaction is L-aspartate(89)-[ribosomal protein uS12]-hydrogen + (sulfur carrier)-SH + AH2 + 2 S-adenosyl-L-methionine = 3-methylsulfanyl-L-aspartate(89)-[ribosomal protein uS12]-hydrogen + (sulfur carrier)-H + 5'-deoxyadenosine + L-methionine + A + S-adenosyl-L-homocysteine + 2 H(+). Functionally, catalyzes the methylthiolation of an aspartic acid residue of ribosomal protein uS12. This Afipia carboxidovorans (strain ATCC 49405 / DSM 1227 / KCTC 32145 / OM5) (Oligotropha carboxidovorans) protein is Ribosomal protein uS12 methylthiotransferase RimO.